Reading from the N-terminus, the 592-residue chain is Inactive glycosyltransferase 25 family member 3 (592 aa).

A signal peptide spans 1–19 (MHVARLLPLLLLLGQQLRA). Residues Asn-72, Asn-150, Asn-234, and Asn-357 are each glycosylated (N-linked (GlcNAc...) asparagine). The tract at residues 540–592 (AEWLSDTETSSPWDDDSGRLISQTGSQKALRGPHLHLTGSSGHSLHPHHRDEL) is disordered. The Prevents secretion from ER motif lies at 589-592 (RDEL).

Belongs to the glycosyltransferase 25 family.

It is found in the endoplasmic reticulum lumen. In terms of biological role, probable cell adhesion protein involved in leukocyte transmigration across the blood-brain barrier. Does not express any beta-galactosyltransferase activity in vitro. The chain is Inactive glycosyltransferase 25 family member 3 (Cercam) from Mus musculus (Mouse).